The chain runs to 263 residues: Alpha-tubulin N-acetyltransferase 2 (263 aa).

The N-acetyltransferase domain occupies 1 to 181 (MEIAFDLSTI…NKYALCSNFF (181 aa)). 115-128 (FFVVPTEQRSGNGF) lines the acetyl-CoA pocket. Disordered regions lie at residues 191 to 223 (TPRQ…NRPR) and 242 to 263 (EVDP…RRIW). Residues 200-212 (RASSAVSSHASSR) show a composition bias toward low complexity. Basic and acidic residues predominate over residues 253-263 (NARDFGHRRIW).

This sequence belongs to the acetyltransferase ATAT1 family. As to expression, expressed in touch receptor neurons and in a subset of ciliated neurons, including PDE, ADE, CEP, and OLQ neurons.

The enzyme catalyses L-lysyl-[alpha-tubulin] + acetyl-CoA = N(6)-acetyl-L-lysyl-[alpha-tubulin] + CoA + H(+). Its function is as follows. Specifically acetylates 'Lys-40' in alpha-tubulin/mec-12 on the lumenal side of microtubules. Promotes microtubule destabilization and accelerates microtubule dynamics; this activity may be independent of acetylation activity. Acetylates alpha-tubulin with a slow enzymatic rate, due to a catalytic site that is not optimized for acetyl transfer. Enters the microtubule through each end and diffuses quickly throughout the lumen of microtubules. Acetylates only long/old microtubules because of its slow acetylation rate since it does not have time to act on dynamically unstable microtubules before the enzyme is released. Required for the maintenance of touch receptor neurons and possibly other type of neurons involved in locomotion. The chain is Alpha-tubulin N-acetyltransferase 2 (atat-2) from Caenorhabditis elegans.